We begin with the raw amino-acid sequence, 248 residues long: Non-specific acid phosphatase (248 aa).

The first 20 residues, 1-20 (MKKLLAVFCAGAFVSTSVFA), serve as a signal peptide directing secretion.

Belongs to the class A bacterial acid phosphatase family.

The protein localises to the periplasm. The catalysed reaction is a phosphate monoester + H2O = an alcohol + phosphate. The chain is Non-specific acid phosphatase (phoN) from Providencia stuartii.